The sequence spans 249 residues: MTLPLIAYAPVSQNQRVTNYEVSGDEHARIFTTEGTLSPSAMDNLIAAAYRQVFNEQQMIQSNRQIALESQFKNQQITVRDFIRGLALSDSFRRRNFEVNNNYRFVQMCIQRLLGRDVYSEEEKIAWSIVIATKGLPGFINELLNSQEYLENFGYDTVPYQRRRILPQRISGELPFARMPRYGADHREKLEAIGYFRNQAPLTYRWEWQKQPYPAGVYLAGKVVLYVGGALVSLGIIAVALSAWGIIGL.

A PBS-linker domain is found at 11–189 (VSQNQRVTNY…PRYGADHREK (179 aa)). Residues 223–247 (VVLYVGGALVSLGIIAVALSAWGII) form a helical membrane-spanning segment.

This sequence belongs to the phycobilisome linker protein family. As to quaternary structure, part of a specialized phycobilisome (PBS), a structure that is usually composed of two distinct substructures: a core complex and a number of rods radiating from the core. This protein is part of a core-less PBS rod (called CpcL-PBS) with on average 5 stacked phycocyanin hexamers (PC, CpcA and CpcB). Linker CpcL connects the PC stack to the thylakoid, the hexamers are linked by 1 copy of CpcC1, 3 copies of CpcC2 and the stack is terminated by a single copy of CpcD. Ferredoxin--NADP reductase (petH) is also part of the complex. CpcL-PBS has no central core proteins (allophycocyanin ApcA, ApcB) nor phycobiliprotein ApcE.

Its subcellular location is the cellular thylakoid membrane. Functionally, rod linker protein, associated with phycocyanin. Linker polypeptides determine the state of aggregation and the location of the disk-shaped phycobiliprotein units within the phycobilisome and modulate their spectroscopic properties in order to mediate a directed and optimal energy transfer. Plays a role in energy transfer from the phycobilisome to photosystem I (PSI). Although able to transfer energy to both photosystems, this is predominantly a PSI antenna. This is Photosystem I-associated linker protein CpcL from Synechocystis sp. (strain ATCC 27184 / PCC 6803 / Kazusa).